An 89-amino-acid polypeptide reads, in one-letter code: Small ribosomal subunit protein uS15 (89 aa).

Belongs to the universal ribosomal protein uS15 family. In terms of assembly, part of the 30S ribosomal subunit. Forms a bridge to the 50S subunit in the 70S ribosome, contacting the 23S rRNA.

In terms of biological role, one of the primary rRNA binding proteins, it binds directly to 16S rRNA where it helps nucleate assembly of the platform of the 30S subunit by binding and bridging several RNA helices of the 16S rRNA. Its function is as follows. Forms an intersubunit bridge (bridge B4) with the 23S rRNA of the 50S subunit in the ribosome. The chain is Small ribosomal subunit protein uS15 from Vibrio parahaemolyticus serotype O3:K6 (strain RIMD 2210633).